A 394-amino-acid polypeptide reads, in one-letter code: Elongation factor Tu (394 aa).

The region spanning 10–204 is the tr-type G domain; it reads KPHVNVGTIG…ALDSYIPTPE (195 aa). Positions 19–26 are G1; that stretch reads GHVDHGKT. 19–26 is a GTP binding site; it reads GHVDHGKT. Thr26 is a binding site for Mg(2+). The G2 stretch occupies residues 60–64; it reads GITIN. A G3 region spans residues 81–84; it reads DCPG. Residues 81–85 and 136–139 each bind GTP; these read DCPGH and NKCD. A G4 region spans residues 136–139; that stretch reads NKCD. Residues 174–176 are G5; that stretch reads SAL.

This sequence belongs to the TRAFAC class translation factor GTPase superfamily. Classic translation factor GTPase family. EF-Tu/EF-1A subfamily. As to quaternary structure, monomer.

It localises to the cytoplasm. The catalysed reaction is GTP + H2O = GDP + phosphate + H(+). In terms of biological role, GTP hydrolase that promotes the GTP-dependent binding of aminoacyl-tRNA to the A-site of ribosomes during protein biosynthesis. The sequence is that of Elongation factor Tu from Neisseria meningitidis serogroup A / serotype 4A (strain DSM 15465 / Z2491).